The primary structure comprises 192 residues: dCTP deaminase, dUMP-forming (192 aa).

Residues 101–106 (KSSLGR), Asp119, 127–129 (TLE), Gln148, Tyr162, and Gln174 contribute to the dCTP site. Glu129 serves as the catalytic Proton donor/acceptor. The tract at residues 162–192 (YGSGADGSRYQGQRGPTASRSHVKFHRTHVE) is disordered. A compositionally biased stretch (polar residues) spans 171-181 (YQGQRGPTASR). Residues 182-192 (SHVKFHRTHVE) are compositionally biased toward basic residues.

This sequence belongs to the dCTP deaminase family. Homotrimer.

The catalysed reaction is dCTP + 2 H2O = dUMP + NH4(+) + diphosphate. It functions in the pathway pyrimidine metabolism; dUMP biosynthesis; dUMP from dCTP: step 1/1. Functionally, bifunctional enzyme that catalyzes both the deamination of dCTP to dUTP and the hydrolysis of dUTP to dUMP without releasing the toxic dUTP intermediate. This is dCTP deaminase, dUMP-forming from Beutenbergia cavernae (strain ATCC BAA-8 / DSM 12333 / CCUG 43141 / JCM 11478 / NBRC 16432 / NCIMB 13614 / HKI 0122).